A 207-amino-acid polypeptide reads, in one-letter code: Small ribosomal subunit protein uS4 (207 aa).

Residues 97–160 enclose the S4 RNA-binding domain; it reads SRLDNVVYRM…KKQARIVEAL (64 aa).

It belongs to the universal ribosomal protein uS4 family. In terms of assembly, part of the 30S ribosomal subunit. Contacts protein S5. The interaction surface between S4 and S5 is involved in control of translational fidelity.

In terms of biological role, one of the primary rRNA binding proteins, it binds directly to 16S rRNA where it nucleates assembly of the body of the 30S subunit. With S5 and S12 plays an important role in translational accuracy. In Burkholderia mallei (strain NCTC 10247), this protein is Small ribosomal subunit protein uS4.